The primary structure comprises 140 residues: MAIHYETKATNVGGRKGHVYTDDRALDIDIVPPAQADGKATNPEQLFAAGYASCFNGAFDLILKQNKVRDAHPEVTLTVRLEDDSDSESPKLSVSIDATIKNVISQEEAEKYLQMAHEFCPYSKATQGNINVDLNVNVVD.

This sequence belongs to the OsmC/Ohr family.

This is Organic hydroperoxide resistance protein-like from Staphylococcus aureus (strain USA300).